We begin with the raw amino-acid sequence, 657 residues long: Single-minded homolog 2 (657 aa).

The bHLH domain maps to 1-53 (MKEKSKNAAKTRREKENGEFYELAKLLPLPSAITSQLDKASIIRLTTSYLKMR). PAS domains follow at residues 77–147 (AKEL…PPLH) and 218–288 (PPSA…LVKG). The PAC domain occupies 218 to 288 (PPSAITEIKL…YAHHLLLVKG (71 aa)). The Single-minded C-terminal domain occupies 336–657 (EYKELQLSLD…GASVIITNGR (322 aa)). Residues 354-364 (ESWRTTLSTSQ) are compositionally biased toward polar residues. 2 disordered regions span residues 354–387 (ESWR…NPYP) and 612–641 (LGSA…APGA). The short motif at 367-386 (RKSAKPKNTKMKTKLRTNPY) is the Nuclear localization signal element. Over residues 369–381 (SAKPKNTKMKTKL) the composition is skewed to basic residues.

In terms of assembly, efficient DNA binding requires dimerization with another bHLH protein. Heterodimer of SIM2 and ARNT. In terms of tissue distribution, transcripts were detected in high levels in kidney followed by skeletal muscle and lung. Low levels were found in testis, brain and heart. In early fetal development it is found in CNS, developing kidney, tongue epithelium and cartilage primordia.

It is found in the nucleus. Transcription factor that may be a master gene of CNS development in cooperation with Arnt. It may have pleiotropic effects in the tissues expressed during development. This Mus musculus (Mouse) protein is Single-minded homolog 2 (Sim2).